A 148-amino-acid chain; its full sequence is Large ribosomal subunit protein uL15 (148 aa).

Over residues 1–40 (MADILQMHDLKPAPGANKDRIRVGRGEGSKGKTSGRGDKG) the composition is skewed to basic and acidic residues. The tract at residues 1-47 (MADILQMHDLKPAPGANKDRIRVGRGEGSKGKTSGRGDKGTKKRYQV) is disordered.

Belongs to the universal ribosomal protein uL15 family. As to quaternary structure, part of the 50S ribosomal subunit.

Functionally, binds to the 23S rRNA. This is Large ribosomal subunit protein uL15 from Bifidobacterium adolescentis (strain ATCC 15703 / DSM 20083 / NCTC 11814 / E194a).